We begin with the raw amino-acid sequence, 338 residues long: Methionine import ATP-binding protein MetN 2 (338 aa).

In terms of domain architecture, ABC transporter spans 2-242; that stretch reads IEIEKVCVDF…PQHAFTQQLV (241 aa). An ATP-binding site is contributed by 39-46; that stretch reads GTSGAGKS.

This sequence belongs to the ABC transporter superfamily. Methionine importer (TC 3.A.1.24) family. As to quaternary structure, the complex is composed of two ATP-binding proteins (MetN), two transmembrane proteins (MetI) and a solute-binding protein (MetQ).

The protein resides in the cell inner membrane. The catalysed reaction is L-methionine(out) + ATP + H2O = L-methionine(in) + ADP + phosphate + H(+). The enzyme catalyses D-methionine(out) + ATP + H2O = D-methionine(in) + ADP + phosphate + H(+). Its function is as follows. Part of the ABC transporter complex MetNIQ involved in methionine import. Responsible for energy coupling to the transport system. In Salmonella paratyphi A (strain ATCC 9150 / SARB42), this protein is Methionine import ATP-binding protein MetN 2.